The primary structure comprises 145 residues: Allergen MAG29 (145 aa).

Disordered stretches follow at residues 1–21 and 103–145; these read KDDI…DDKQ and AGGA…EEVD. Residues 104–137 show a composition bias toward gly residues; that stretch reads GGAGAGGMPGGFPGGFPGTDGSGGGAAGGDGGKS.

It belongs to the heat shock protein 70 family.

This is Allergen MAG29 (MAG29) from Dermatophagoides farinae (American house dust mite).